Reading from the N-terminus, the 281-residue chain is Urease accessory protein UreD (281 aa).

This sequence belongs to the UreD family. UreD, UreF and UreG form a complex that acts as a GTP-hydrolysis-dependent molecular chaperone, activating the urease apoprotein by helping to assemble the nickel containing metallocenter of UreC. The UreE protein probably delivers the nickel.

The protein localises to the cytoplasm. In terms of biological role, required for maturation of urease via the functional incorporation of the urease nickel metallocenter. The polypeptide is Urease accessory protein UreD (Pseudomonas savastanoi pv. phaseolicola (strain 1448A / Race 6) (Pseudomonas syringae pv. phaseolicola (strain 1448A / Race 6))).